The following is a 396-amino-acid chain: Acetate kinase (396 aa).

Asn-8 is a Mg(2+) binding site. An ATP-binding site is contributed by Lys-15. Substrate is bound at residue Arg-90. The active-site Proton donor/acceptor is Asp-147. ATP contacts are provided by residues His-207–Gly-211, Asp-283–Arg-285, and Gly-330–Asn-334. Glu-384 lines the Mg(2+) pocket.

It belongs to the acetokinase family. In terms of assembly, homodimer. Requires Mg(2+) as cofactor. Mn(2+) is required as a cofactor.

It localises to the cytoplasm. It catalyses the reaction acetate + ATP = acetyl phosphate + ADP. It participates in metabolic intermediate biosynthesis; acetyl-CoA biosynthesis; acetyl-CoA from acetate: step 1/2. In terms of biological role, catalyzes the formation of acetyl phosphate from acetate and ATP. Can also catalyze the reverse reaction. In Lacticaseibacillus paracasei (strain ATCC 334 / BCRC 17002 / CCUG 31169 / CIP 107868 / KCTC 3260 / NRRL B-441) (Lactobacillus paracasei), this protein is Acetate kinase.